The following is a 456-amino-acid chain: Bifunctional protein GlmU (456 aa).

A pyrophosphorylase region spans residues 1 to 228 (MTLPLHVLIL…PQDVEGANDP (228 aa)). Residues 10 to 13 (LAAG), Lys24, Gln76, 81 to 82 (GT), 103 to 105 (YGD), Gly138, Glu153, Asn168, and Asn226 each bind UDP-N-acetyl-alpha-D-glucosamine. Residue Asp105 participates in Mg(2+) binding. Residue Asn226 coordinates Mg(2+). The interval 229-249 (WQLAQLERAWQLRAARTLCLQ) is linker. Residues 250–456 (GVRMADPARV…GWKRPTKKSP (207 aa)) form an N-acetyltransferase region. 2 residues coordinate UDP-N-acetyl-alpha-D-glucosamine: Arg332 and Lys350. His362 functions as the Proton acceptor in the catalytic mechanism. UDP-N-acetyl-alpha-D-glucosamine contacts are provided by Tyr365 and Asn376. Acetyl-CoA contacts are provided by residues Ala379, 385–386 (NY), Ser404, Ala422, and Arg439.

In the N-terminal section; belongs to the N-acetylglucosamine-1-phosphate uridyltransferase family. This sequence in the C-terminal section; belongs to the transferase hexapeptide repeat family. In terms of assembly, homotrimer. It depends on Mg(2+) as a cofactor.

The protein resides in the cytoplasm. The enzyme catalyses alpha-D-glucosamine 1-phosphate + acetyl-CoA = N-acetyl-alpha-D-glucosamine 1-phosphate + CoA + H(+). It carries out the reaction N-acetyl-alpha-D-glucosamine 1-phosphate + UTP + H(+) = UDP-N-acetyl-alpha-D-glucosamine + diphosphate. It participates in nucleotide-sugar biosynthesis; UDP-N-acetyl-alpha-D-glucosamine biosynthesis; N-acetyl-alpha-D-glucosamine 1-phosphate from alpha-D-glucosamine 6-phosphate (route II): step 2/2. It functions in the pathway nucleotide-sugar biosynthesis; UDP-N-acetyl-alpha-D-glucosamine biosynthesis; UDP-N-acetyl-alpha-D-glucosamine from N-acetyl-alpha-D-glucosamine 1-phosphate: step 1/1. Its pathway is bacterial outer membrane biogenesis; LPS lipid A biosynthesis. Catalyzes the last two sequential reactions in the de novo biosynthetic pathway for UDP-N-acetylglucosamine (UDP-GlcNAc). The C-terminal domain catalyzes the transfer of acetyl group from acetyl coenzyme A to glucosamine-1-phosphate (GlcN-1-P) to produce N-acetylglucosamine-1-phosphate (GlcNAc-1-P), which is converted into UDP-GlcNAc by the transfer of uridine 5-monophosphate (from uridine 5-triphosphate), a reaction catalyzed by the N-terminal domain. In Xanthomonas axonopodis pv. citri (strain 306), this protein is Bifunctional protein GlmU.